We begin with the raw amino-acid sequence, 283 residues long: MAEITASLVKELRERTGAGMMECKKALVEANGDIELAIDNMRKSGQAKAAKKAGRVAAEGVILARIGAGFGVLVEMNCETDFVAKDAGFLGLANEVADFALANKGTTIETLAAQFEEKRAALVAKIGENMNIRRVQYLDGQVIAQYLHGAKIGVLVAGEGSDEELKKVAMHVAASRPEFVNPEDVSAEVVAHERQIQIDIAINSGKPKEIAEKMVEGRMKKFTGEVSLTGQAFVMDPSQSVGDYLKSVNTKVTNFIRLEVGEGIEKVEEDFAAEVAKITGGNA.

Residues Thr80 to Val83 form an involved in Mg(2+) ion dislocation from EF-Tu region.

It belongs to the EF-Ts family.

The protein localises to the cytoplasm. Its function is as follows. Associates with the EF-Tu.GDP complex and induces the exchange of GDP to GTP. It remains bound to the aminoacyl-tRNA.EF-Tu.GTP complex up to the GTP hydrolysis stage on the ribosome. The sequence is that of Elongation factor Ts from Actinobacillus pleuropneumoniae serotype 5b (strain L20).